The chain runs to 401 residues: Protein-glutamate methylesterase/protein-glutamine glutaminase (401 aa).

The Response regulatory domain maps to 16–134 (RVLVIDDSAV…LAGAEEFRRD (119 aa)). 4-aspartylphosphate is present on Asp67. The tract at residues 146-208 (PIPPVPTQRD…PQGRGTPRNT (63 aa)) is disordered. Composition is skewed to low complexity over residues 166 to 176 (AAPGAPVARSI) and 185 to 199 (SAPAKKAFAPVAQPP). Residues 205–400 (PRNTARPEII…PGIVRRAKGG (196 aa)) enclose the CheB-type methylesterase domain. Residues Ser219, His246, and Asp342 contribute to the active site.

It belongs to the CheB family. Phosphorylated by CheA. Phosphorylation of the N-terminal regulatory domain activates the methylesterase activity.

The protein resides in the cytoplasm. It catalyses the reaction [protein]-L-glutamate 5-O-methyl ester + H2O = L-glutamyl-[protein] + methanol + H(+). The enzyme catalyses L-glutaminyl-[protein] + H2O = L-glutamyl-[protein] + NH4(+). In terms of biological role, involved in chemotaxis. Part of a chemotaxis signal transduction system that modulates chemotaxis in response to various stimuli. Catalyzes the demethylation of specific methylglutamate residues introduced into the chemoreceptors (methyl-accepting chemotaxis proteins or MCP) by CheR. Also mediates the irreversible deamidation of specific glutamine residues to glutamic acid. This chain is Protein-glutamate methylesterase/protein-glutamine glutaminase, found in Maricaulis maris (strain MCS10) (Caulobacter maris).